The chain runs to 684 residues: Sec1 family domain-containing protein 2 (684 aa).

This sequence belongs to the STXBP/unc-18/SEC1 family.

May be involved in protein transport. The protein is Sec1 family domain-containing protein 2 (Scfd2) of Mus musculus (Mouse).